The following is a 348-amino-acid chain: Phenylalanine--tRNA ligase alpha subunit (348 aa).

Mg(2+) is bound at residue Glu-259.

Belongs to the class-II aminoacyl-tRNA synthetase family. Phe-tRNA synthetase alpha subunit type 1 subfamily. In terms of assembly, tetramer of two alpha and two beta subunits. The cofactor is Mg(2+).

It is found in the cytoplasm. It carries out the reaction tRNA(Phe) + L-phenylalanine + ATP = L-phenylalanyl-tRNA(Phe) + AMP + diphosphate + H(+). The chain is Phenylalanine--tRNA ligase alpha subunit from Levilactobacillus brevis (strain ATCC 367 / BCRC 12310 / CIP 105137 / JCM 1170 / LMG 11437 / NCIMB 947 / NCTC 947) (Lactobacillus brevis).